A 448-amino-acid chain; its full sequence is Guanine deaminase (448 aa).

Positions 74 and 76 each coordinate Zn(2+). Substrate contacts are provided by residues 76–79 (HAPQ), 204–205 (RF), 231–234 (HISE), and aspartate 319. Zn(2+) contacts are provided by histidine 231 and aspartate 319.

It belongs to the metallo-dependent hydrolases superfamily. ATZ/TRZ family. Zn(2+) is required as a cofactor.

The enzyme catalyses guanine + H2O + H(+) = xanthine + NH4(+). It participates in purine metabolism; guanine degradation; xanthine from guanine: step 1/1. Strongly inhibited by p-chloromercuribenzoate (PCMB). Potassium cyanide (KCN) strongly inhibits activity towards 7,8-dihydropterin but has almost no effect on activity towards guanine. Pterin inhibits activity towards guanine but has little effect on activity towards 7,8-dihydropterin. Catalyzes the hydrolytic deamination of guanine, producing xanthine and ammonia. Also has 7,8-dihydropterin deaminase activity, which plays a role in synthesis of the red eye pigment aurodrosopterin. The chain is Guanine deaminase from Drosophila melanogaster (Fruit fly).